Reading from the N-terminus, the 386-residue chain is Alkanesulfonate monooxygenase (386 aa).

This sequence belongs to the SsuD family.

It catalyses the reaction an alkanesulfonate + FMNH2 + O2 = an aldehyde + FMN + sulfite + H2O + 2 H(+). Catalyzes the desulfonation of aliphatic sulfonates. In Paraburkholderia phytofirmans (strain DSM 17436 / LMG 22146 / PsJN) (Burkholderia phytofirmans), this protein is Alkanesulfonate monooxygenase.